We begin with the raw amino-acid sequence, 139 residues long: Large ribosomal subunit protein uL24 (139 aa).

Residues 1-25 (MKRNTNVSSSRRKSRKAHFTASSGE) form a disordered region.

It belongs to the universal ribosomal protein uL24 family.

This chain is Large ribosomal subunit protein uL24 (rpl26), found in Dictyostelium discoideum (Social amoeba).